The sequence spans 51 residues: MASHKTFRIKRFLAKKQKQNRPIPQWIRMKTGNKIRYNSKRRHWRRTKLGL.

Belongs to the eukaryotic ribosomal protein eL39 family. As to quaternary structure, interacts with impact.

This is Large ribosomal subunit protein eL39 (rpl39) from Ictalurus punctatus (Channel catfish).